The chain runs to 413 residues: Putative competence-damage inducible protein (413 aa).

It belongs to the CinA family.

The polypeptide is Putative competence-damage inducible protein (Alkaliphilus oremlandii (strain OhILAs) (Clostridium oremlandii (strain OhILAs))).